Consider the following 482-residue polypeptide: Alanine aminotransferase 2 (482 aa).

Residue Lys-299 is modified to N6-(pyridoxal phosphate)lysine.

The protein belongs to the class-I pyridoxal-phosphate-dependent aminotransferase family. Alanine aminotransferase subfamily. In terms of assembly, homodimer. The cofactor is pyridoxal 5'-phosphate.

The enzyme catalyses L-alanine + 2-oxoglutarate = pyruvate + L-glutamate. It functions in the pathway photosynthesis; C4 acid pathway. Its pathway is amino-acid degradation; L-alanine degradation via transaminase pathway; pyruvate from L-alanine: step 1/1. In terms of biological role, transfer of C3 units between the cytosol of mesophyll and bundle sheath cells to maintain a nitrogen-carbon balance in the C4-dicarboxylic pathway. The polypeptide is Alanine aminotransferase 2 (Hordeum vulgare (Barley)).